Consider the following 131-residue polypeptide: Small ribosomal subunit protein uS12 (131 aa).

Asp89 is modified (3-methylthioaspartic acid). Positions 106–131 (GVDGRKQGRSKYGAKKAKVAKTASAK) are disordered. Residues 112-124 (QGRSKYGAKKAKV) are compositionally biased toward basic residues.

The protein belongs to the universal ribosomal protein uS12 family. Part of the 30S ribosomal subunit. Contacts proteins S8 and S17. May interact with IF1 in the 30S initiation complex.

With S4 and S5 plays an important role in translational accuracy. Its function is as follows. Interacts with and stabilizes bases of the 16S rRNA that are involved in tRNA selection in the A site and with the mRNA backbone. Located at the interface of the 30S and 50S subunits, it traverses the body of the 30S subunit contacting proteins on the other side and probably holding the rRNA structure together. The combined cluster of proteins S8, S12 and S17 appears to hold together the shoulder and platform of the 30S subunit. The protein is Small ribosomal subunit protein uS12 of Endomicrobium trichonymphae.